An 887-amino-acid chain; its full sequence is Golgin IMH1 (887 aa).

4 disordered regions span residues 16-50 (LAKG…EELP), 142-214 (QESL…MKSQ), 240-301 (GASQ…SAGD), and 783-822 (LKMS…SISS). Basic and acidic residues-rich tracts occupy residues 37–50 (GRRE…EELP) and 145–210 (LEQR…HAAE). The stretch at 118–241 (AMLTEEIKRI…YKSTIQELGA (124 aa)) forms a coiled coil. Residues 240–254 (GASQATGEAQPSSEA) show a composition bias toward polar residues. The segment covering 258–273 (RGKKGKGKRGKGKKRV) has biased composition (basic residues). Positions 299-788 (AGDEIIEAIE…LSTQLKMSKD (490 aa)) form a coiled coil. Low complexity predominate over residues 788-807 (DMSSQSRHSSRSGSLVSPSS). Positions 808 to 822 (DNETGNSPRKISISS) are enriched in polar residues. The GRIP domain maps to 837–885 (EMESNEKLAYIRNVLLGFLEHREQRSQLLPVVSTLLQLSSHDEKRLLTS).

It localises to the cytoplasm. The protein resides in the golgi apparatus membrane. Involved in vesicular transport between an endosomal compartment and the Golgi apparatus. In Eremothecium gossypii (strain ATCC 10895 / CBS 109.51 / FGSC 9923 / NRRL Y-1056) (Yeast), this protein is Golgin IMH1 (IMH1).